Reading from the N-terminus, the 372-residue chain is High-affinity lysophosphatidic acid receptor (372 aa).

The Extracellular portion of the chain corresponds to 1 to 38 (MGCNNTALDNCMLPNLSIATAPLDLRFAFSTPLRMLLA). 2 N-linked (GlcNAc...) asparagine glycosylation sites follow: Asn-4 and Asn-15. A helical transmembrane segment spans residues 39–59 (IIMILMIAIAFLGNAIVCLIV). Topologically, residues 60-80 (YQKPAMRSAINLLLATLAFSD) are cytoplasmic. A helical membrane pass occupies residues 81–101 (IMLSLFCMPFTAVTIITGSWL). Over 102–108 (FGTQFCQ) the chain is Extracellular. A helical transmembrane segment spans residues 109-129 (ISAMLYWFFVLEGVAILLIIS). Over 130–149 (VDRFLIIVQRQDKLNPHRAK) the chain is Cytoplasmic. Residues 150–170 (IMIAASWVLSFCISLPSVVGW) form a helical membrane-spanning segment. Topologically, residues 171–198 (TLVEVPTRAPQCVLGYTEFSADRVYAVM) are extracellular. The chain crosses the membrane as a helical span at residues 199–219 (LIVAVFFIPFSVMLYSYLCIL). Residues 220–268 (NTVRRNAVRIHTHADSLCLSQVSKLGLMGLQRPHQMNVDMSFKTRAFTT) lie on the Cytoplasmic side of the membrane. The helical transmembrane segment at 269–289 (ILILFIGFSLCWLPHSVFSLL) threads the bilayer. Residues 290–301 (SVFSRTFYYSSS) are Extracellular-facing. The helical transmembrane segment at 302 to 324 (FYSISTCTLWLTYLKSVFNPVIY) threads the bilayer. Topologically, residues 325–372 (CWRIKKFREACLEFMPKTFKILPNVRGRTRRRIRPSTIYVCGEHQSAV) are cytoplasmic.

Belongs to the G-protein coupled receptor 1 family. Ubiquitously expressed.

Its subcellular location is the cell membrane. Its function is as follows. Highly selective receptor for lysophosphatidic acid (LPA), a mediator of diverse cellular activities. The polypeptide is High-affinity lysophosphatidic acid receptor (Xenopus laevis (African clawed frog)).